We begin with the raw amino-acid sequence, 60 residues long: Small ribosomal subunit protein eS31 (60 aa).

Positions 32, 35, 50, and 53 each coordinate Zn(2+). Residues 32-53 (CPRCGAGVFMGEHKDRFSCGKC) form a C4-type zinc finger.

Belongs to the eukaryotic ribosomal protein eS31 family. In terms of assembly, part of the 30S ribosomal subunit. It depends on Zn(2+) as a cofactor.

The sequence is that of Small ribosomal subunit protein eS31 from Methanocorpusculum labreanum (strain ATCC 43576 / DSM 4855 / Z).